Here is a 38-residue protein sequence, read N- to C-terminus: Toxin Lqh 8/6 (38 aa).

4 cysteine pairs are disulfide-bonded: Cys2–Cys19, Cys5–Cys28, Cys16–Cys33, and Cys20–Cys35.

In terms of tissue distribution, expressed by the venom gland.

It localises to the secreted. Toxin with unknown function in healthy organisms. On glioma cells, interacts with chloride channels (probably ClC-3/CLCN3) and MMP2 at the surface of glioma cells. This complex is then internalized via caveolae, thus inhibiting the chloride channels necessary for cell shrinkage and tumor propagation. This Leiurus hebraeus (Hebrew deathstalker scorpion) protein is Toxin Lqh 8/6.